A 372-amino-acid polypeptide reads, in one-letter code: MAGKSQMVEAFGWAARDTSGVLYPFKFLRRATGERDVQFKVLYCGMCDWDMTVLKNGFGTTTYPVVPGHEIVGVVTEVGSKVQKFKVGDTVGVGTLVGSCRTCKKCKHDLEQYCHSYLMADGACYSYGNTICGDMSTRVYGGYSDIMVVDEYFAIVWPAKNYPLAAGAPLLCGGIVAYSAIRYYGLDKPGMHIGIVGLGGIGRMAVKFAKAFGAKVTVISTSINKKQEALEKFGADSFLYSKDPQEMEAAVDTLDAIIDTAPKFHPIVPLINLLKFEGKLILLGAVEESYELPASPLIVERKMVAGSASGGVKEIQEMMDFAAKHNIVAEIEIIPIDYVNTAIGRIEKGDAKDRFVIDIANTLKSGEDINSS.

Residues Cys-47, Asp-50, His-69, Glu-70, Cys-100, Cys-103, Cys-106, Cys-114, and Cys-172 each contribute to the Zn(2+) site. NADP(+) contacts are provided by residues 197–202 (GLGGIG), Lys-226, 283–285 (LGA), Ser-307, and Arg-354.

This sequence belongs to the zinc-containing alcohol dehydrogenase family. In terms of assembly, homodimer. Zn(2+) is required as a cofactor.

The enzyme catalyses (19E)-cur-19-en-17-al + NADP(+) = norfluorocurarine + NADPH + H(+). It catalyses the reaction 17,18-epoxy-17-hydroxycur-19-ene + NADP(+) = 18-hydroxynorfluorocurarine + NADPH + H(+). It functions in the pathway alkaloid biosynthesis. Functionally, alcohol dehydrogenase involved in the biosynthesis of curare monoterpene indole alkaloids (MIAs), natural products such as diaboline, a pharmacologically active compound used to regulate blood pressure. Curare alkaloids act as animal glycine receptor antagonists. Catalyzes the conversion of norfluorocurarine to desoxy Wieland-Gumlich aldehyde, and of 18-OH norfluorocurarine to Wieland-Gumlich aldehyde. This chain is 18-hydroxynorfluorocurarine reductase, found in Strychnos sp.